The chain runs to 433 residues: tRNA-2-methylthio-N(6)-dimethylallyladenosine synthase (433 aa).

Positions 4 to 119 (KKLFIQTLGC…ITQAIKTPKF (116 aa)) constitute an MTTase N-terminal domain. [4Fe-4S] cluster contacts are provided by C13, C50, C82, C151, C155, and C158. Positions 137 to 370 (RNSIYKSYIN…QNRHSEILDE (234 aa)) constitute a Radical SAM core domain. Residues 373–433 (KKQENKTFKV…KRMVLYGEII (61 aa)) enclose the TRAM domain.

It belongs to the methylthiotransferase family. MiaB subfamily. In terms of assembly, monomer. [4Fe-4S] cluster is required as a cofactor.

Its subcellular location is the cytoplasm. The enzyme catalyses N(6)-dimethylallyladenosine(37) in tRNA + (sulfur carrier)-SH + AH2 + 2 S-adenosyl-L-methionine = 2-methylsulfanyl-N(6)-dimethylallyladenosine(37) in tRNA + (sulfur carrier)-H + 5'-deoxyadenosine + L-methionine + A + S-adenosyl-L-homocysteine + 2 H(+). Its function is as follows. Catalyzes the methylthiolation of N6-(dimethylallyl)adenosine (i(6)A), leading to the formation of 2-methylthio-N6-(dimethylallyl)adenosine (ms(2)i(6)A) at position 37 in tRNAs that read codons beginning with uridine. The polypeptide is tRNA-2-methylthio-N(6)-dimethylallyladenosine synthase (Campylobacter jejuni subsp. doylei (strain ATCC BAA-1458 / RM4099 / 269.97)).